The primary structure comprises 384 residues: Helix-loop-helix protein delilah (384 aa).

2 disordered regions span residues 1 to 101 (MKSN…TANA) and 187 to 227 (EEAE…KIVP). The span at 75-86 (KSRKNAPTKSKT) shows a compositional bias: basic residues. Positions 94–153 (YRRKTANARERTRMREINTAFETLRHCVPEAIKGEDAANTNEKLTKITTLRLAMKYITML) constitute a bHLH domain. The segment covering 209–224 (KKSSAASKRQSQKQAK) has biased composition (low complexity).

As to quaternary structure, efficient DNA binding requires dimerization with another bHLH protein, possibly with da. Expressed almost exclusively in the attachments sites of the somatic muscles to tendon cells in the epidermis.

The protein resides in the nucleus. Functionally, probably plays an important role in the differentiation of epidermal cells into the tendon cells that form the attachment sites for all muscles. This is Helix-loop-helix protein delilah (tx) from Drosophila melanogaster (Fruit fly).